Reading from the N-terminus, the 246-residue chain is Nodulation protein G (246 aa).

Residue 8-32 coordinates NAD(+); it reads VTGAMGGLGTAICQALAKDGCIVAA. S140 lines the substrate pocket. The active-site Proton acceptor is Y153.

Belongs to the short-chain dehydrogenases/reductases (SDR) family.

Proposed to modify Nod factor fatty acyl chain. The sequence is that of Nodulation protein G (nodG) from Azospirillum brasilense.